The sequence spans 833 residues: Leucine--tRNA ligase (833 aa).

The short motif at 41–52 (PYPSGAGLHVGH) is the 'HIGH' region element. The short motif at 610-614 (KMSKS) is the 'KMSKS' region element. K613 is a binding site for ATP.

This sequence belongs to the class-I aminoacyl-tRNA synthetase family.

It is found in the cytoplasm. The enzyme catalyses tRNA(Leu) + L-leucine + ATP = L-leucyl-tRNA(Leu) + AMP + diphosphate. The polypeptide is Leucine--tRNA ligase (Streptococcus pyogenes serotype M49 (strain NZ131)).